Consider the following 334-residue polypeptide: Methionine adenosyltransferase 2 subunit beta (334 aa).

Residues 37–40 (TGLL), 60–62 (FRR), 71–72 (NL), cysteine 93, arginine 97, tyrosine 159, and leucine 185 contribute to the NADP(+) site. Threonine 309 is modified (phosphothreonine). The segment at 319–334 (LWPFLIDKRWRQTVFH) is required for interaction with MAT2A.

This sequence belongs to the dTDP-4-dehydrorhamnose reductase family. MAT2B subfamily. As to quaternary structure, heterotrimer; composed of a catalytic MAT2A homodimer that binds one regulatory MAT2B chain. Heterohexamer; composed of a central, catalytic MAT2A homotetramer flanked on either side by a regulatory MAT2B chain. NADP binding increases the affinity for MAT2A.

The protein operates within amino-acid biosynthesis; S-adenosyl-L-methionine biosynthesis; S-adenosyl-L-methionine from L-methionine: step 1/1. Regulatory subunit of S-adenosylmethionine synthetase 2, an enzyme that catalyzes the formation of S-adenosylmethionine from methionine and ATP. Regulates MAT2A catalytic activity by changing its kinetic properties, increasing its affinity for L-methionine. Can bind NADP (in vitro). The chain is Methionine adenosyltransferase 2 subunit beta (MAT2B) from Pongo abelii (Sumatran orangutan).